The following is a 116-amino-acid chain: Endocuticle structural glycoprotein SgAbd-4 (116 aa).

The residue at position 1 (Gln1) is a Pyrrolidone carboxylic acid. The Chitin-binding type R&amp;R domain occupies 20-92 (DGSYQWNYET…PQGAHFPTPP (73 aa)). Residues Thr90 and Thr107 are each glycosylated (O-linked (HexNAc...) threonine). The O-linked (HexNAc...) serine glycan is linked to Ser110. Thr111 is a glycosylation site (O-linked (HexNAc...) threonine). Residue Pro116 is modified to Proline amide.

Functionally, component of the abdominal endocuticle. This chain is Endocuticle structural glycoprotein SgAbd-4, found in Schistocerca gregaria (Desert locust).